Consider the following 804-residue polypeptide: Probable protein phosphatase 2C 18 (804 aa).

Residues 19-39 traverse the membrane as a helical segment; that stretch reads DASGPVLFWCVLIIFAVPDAI. The PPM-type phosphatase domain occupies 129-434; the sequence is KYIVSSMQGL…ENTTVILVQF (306 aa). Aspartate 165, glycine 166, glutamine 384, and glutamate 425 together coordinate Mn(2+). Disordered regions lie at residues 460-509, 564-599, 623-653, and 675-804; these read STSA…GGSA, DEVE…LNAS, PLQG…DDDV, and VDST…EGSP. The segment covering 468–499 has biased composition (low complexity); sequence GSDSDTSATSDEGVDDTATAGTTTTGYEAGSS. Residues 628–637 are compositionally biased toward polar residues; sequence DVSSTSTNPN. The segment covering 638 to 647 has biased composition (low complexity); sequence TATDTGSGSR. The span at 713–734 shows a compositional bias: polar residues; sequence LVNNDTTVADNNASGVADSTTV. Positions 776-789 are enriched in low complexity; the sequence is DATATATASASAAV. Residues 790–804 show a composition bias toward acidic residues; it reads ADDEGTAPDDSEGSP.

This sequence belongs to the PP2C family. The cofactor is Mg(2+). It depends on Mn(2+) as a cofactor.

It is found in the membrane. It catalyses the reaction O-phospho-L-seryl-[protein] + H2O = L-seryl-[protein] + phosphate. It carries out the reaction O-phospho-L-threonyl-[protein] + H2O = L-threonyl-[protein] + phosphate. This Oryza sativa subsp. japonica (Rice) protein is Probable protein phosphatase 2C 18.